Here is a 100-residue protein sequence, read N- to C-terminus: MIGLNHYLIVSGLLFCIGLAGMLKRKNILLLFFSTEIMLNAINIGFIAISKYTHNLDGQMFALFIIAIAASEVAIGLGLVILWFKKYKSLDIDSLNAMKG.

Helical transmembrane passes span 1 to 21 (MIGLNHYLIVSGLLFCIGLAG), 28 to 48 (ILLLFFSTEIMLNAINIGFIA), and 64 to 84 (FIIAIAASEVAIGLGLVILWF).

Belongs to the complex I subunit 4L family. In terms of assembly, NDH-1 is composed of 14 different subunits. Subunits NuoA, H, J, K, L, M, N constitute the membrane sector of the complex.

The protein localises to the cell inner membrane. The enzyme catalyses a quinone + NADH + 5 H(+)(in) = a quinol + NAD(+) + 4 H(+)(out). NDH-1 shuttles electrons from NADH, via FMN and iron-sulfur (Fe-S) centers, to quinones in the respiratory chain. The immediate electron acceptor for the enzyme in this species is believed to be ubiquinone. Couples the redox reaction to proton translocation (for every two electrons transferred, four hydrogen ions are translocated across the cytoplasmic membrane), and thus conserves the redox energy in a proton gradient. This Helicobacter pylori (strain G27) protein is NADH-quinone oxidoreductase subunit K.